Here is a 184-residue protein sequence, read N- to C-terminus: Glutathione-regulated potassium-efflux system ancillary protein KefG (184 aa).

The protein belongs to the NAD(P)H dehydrogenase (quinone) family. KefG subfamily. As to quaternary structure, interacts with KefB.

The protein localises to the cell inner membrane. The catalysed reaction is a quinone + NADH + H(+) = a quinol + NAD(+). The enzyme catalyses a quinone + NADPH + H(+) = a quinol + NADP(+). Its function is as follows. Regulatory subunit of a potassium efflux system that confers protection against electrophiles. Required for full activity of KefB. This Yersinia enterocolitica serotype O:8 / biotype 1B (strain NCTC 13174 / 8081) protein is Glutathione-regulated potassium-efflux system ancillary protein KefG.